The sequence spans 418 residues: Hydroxysteroid dehydrogenase-like protein 2 (418 aa).

NADP(+) is bound by residues 17–23 (GASRGIG), lysine 42, and aspartate 74. Lysine 42 carries the N6-(2-hydroxyisobutyryl)lysine modification. Lysine 116 bears the N6-acetyllysine mark. The Proton acceptor role is filled by tyrosine 168. Lysine 172 provides a ligand contact to NADP(+). The 110-residue stretch at 306-415 (RSGAVEETFR…KLEKLMNQMN (110 aa)) folds into the SCP2 domain. Lysine 318 bears the N6-succinyllysine mark.

It belongs to the short-chain dehydrogenases/reductases (SDR) family.

The protein localises to the peroxisome. It is found in the mitochondrion. Has apparently no steroid dehydrogenase activity. Controls bile acid (BA) and lipid metabolism in response to nutritional cues. This is Hydroxysteroid dehydrogenase-like protein 2 (HSDL2) from Bos taurus (Bovine).